The following is a 934-amino-acid chain: Coiled-coil domain-containing protein 39 (934 aa).

4 coiled-coil regions span residues 17 to 133 (IPVA…DGLK), 164 to 512 (SQQD…HNDL), 540 to 615 (VDRS…SQIR), and 664 to 826 (VIKA…EQDI). The interval 866-934 (LPTAKGPSSR…NIPKGKKLNK (69 aa)) is disordered. Residues 873–892 (SSRSSSQSSLSSIRSLEDSI) are compositionally biased toward low complexity. Serine 887 and serine 895 each carry phosphoserine. Residues 912–925 (RSDSSRSSSGSNSN) show a composition bias toward low complexity.

This sequence belongs to the CCDC39 family.

Its subcellular location is the cytoplasm. The protein resides in the cytoskeleton. The protein localises to the cilium axoneme. In terms of biological role, required for assembly of dynein regulatory complex (DRC) and inner dynein arm (IDA) complexes, which are responsible for ciliary beat regulation, thereby playing a central role in motility in cilia and flagella. Probably acts together with CCDC40 to form a molecular ruler that determines the 96 nanometer (nm) repeat length and arrangements of components in cilia and flagella. Not required for outer dynein arm complexes assembly. In Rattus norvegicus (Rat), this protein is Coiled-coil domain-containing protein 39 (Ccdc39).